A 151-amino-acid chain; its full sequence is uncharacterized protein (151 aa).

3 helical membrane passes run 12-32 (LAYF…LFII), 59-79 (LAFL…YGLL), and 114-134 (YFAY…IAFG).

It is found in the cell membrane. This is an uncharacterized protein from Bacillus subtilis (strain 168).